Reading from the N-terminus, the 189-residue chain is MIVILNNGGQYVHRIQRSLKYIGVPAKIVLNSTNLEEIEKNPEIKGIILSGGPDITKATNCENIALNSKLPVLGICLGHQLISKAYGGKVKRAESEEYASIKIHVKYENDIFKNVPNEFTAWASHMDEVKEIPDCLEVLAFSEICGVEAFKHKEKLVYGVQFHPEVSHTEHGELILKNFCKVCGFKFNE.

The region spanning 1 to 189 is the Glutamine amidotransferase type-1 domain; it reads MIVILNNGGQ…CKVCGFKFNE (189 aa). Cysteine 76 serves as the catalytic Nucleophile. Active-site residues include histidine 163 and glutamate 165.

Heterodimer composed of a glutamine amidotransferase subunit (A) and a GMP-binding subunit (B).

The enzyme catalyses XMP + L-glutamine + ATP + H2O = GMP + L-glutamate + AMP + diphosphate + 2 H(+). Its pathway is purine metabolism; GMP biosynthesis; GMP from XMP (L-Gln route): step 1/1. Its function is as follows. Catalyzes the synthesis of GMP from XMP. The chain is GMP synthase [glutamine-hydrolyzing] subunit A from Methanococcus vannielii (strain ATCC 35089 / DSM 1224 / JCM 13029 / OCM 148 / SB).